Reading from the N-terminus, the 303-residue chain is tRNA pseudouridine synthase B (303 aa).

Residue Asp47 is the Nucleophile of the active site.

The protein belongs to the pseudouridine synthase TruB family. Type 1 subfamily.

The enzyme catalyses uridine(55) in tRNA = pseudouridine(55) in tRNA. Responsible for synthesis of pseudouridine from uracil-55 in the psi GC loop of transfer RNAs. The sequence is that of tRNA pseudouridine synthase B from Legionella pneumophila (strain Lens).